The following is a 281-amino-acid chain: Elongation factor 1-delta (281 aa).

Residue Ala2 is modified to N-acetylalanine. Lys17 is modified (N6-acetyllysine). Residues Ser37, Ser44, Ser60, Ser86, and Ser106 each carry the phosphoserine modification. A leucine-zipper region spans residues 80-115 (LVVRIASLEVENQSLRGVVQELQQAISKLEARLNVL). Lys107 carries the post-translational modification N6-acetyllysine. Lys117 bears the N6-acetyllysine; alternate mark. Lys117 is modified (N6-succinyllysine; alternate). The interval 118–172 (SSPGHRATAPQTQHVSPMRQVEPPAKKPATPAEDDEDDDIDLFGSDNEEEDKEAA) is disordered. Position 119 is a phosphoserine (Ser119). Thr129 carries the phosphothreonine modification. Phosphoserine is present on Ser133. Residue Thr147 is modified to Phosphothreonine. Residues 149–169 (AEDDEDDDIDLFGSDNEEEDK) show a composition bias toward acidic residues. Ser162 bears the Phosphoserine; by CK2 mark. A catalytic (GEF) region spans residues 173–281 (QLREERLRQY…SVDIAAFNKI (109 aa)).

The protein belongs to the EF-1-beta/EF-1-delta family. In terms of assembly, EF-1 is composed of 4 subunits: alpha, beta, delta isoform 1, and gamma. Isoform 2 interacts with HSF1 and NFE2L2.

Its subcellular location is the nucleus. Functionally, EF-1-beta and EF-1-delta stimulate the exchange of GDP bound to EF-1-alpha to GTP, regenerating EF-1-alpha for another round of transfer of aminoacyl-tRNAs to the ribosome. Its function is as follows. Regulates induction of heat-shock-responsive genes through association with heat shock transcription factors and direct DNA-binding at heat shock promoter elements (HSE). This chain is Elongation factor 1-delta (EEF1D), found in Macaca fascicularis (Crab-eating macaque).